Reading from the N-terminus, the 382-residue chain is MDLITTTAELASVCARLANYPVVTVDTEFLRETTYYPLLCVVQMASPDEAVVVDALAEGIDLKPFFDLMSNERVLKVFHAARQDIEIVWHQAGIIPHPIFDTQVAAMVLGYGDSIAYDALVERVNGHRPDKTHRFTDWSRRPLTKDQLEYAVADVTHLRDVFAALDADLKKRGRGDWVSEEMEVLTSPKTYDFHPERAWERLKTRVRKPKDLAVMMEVAAWREQEAQSRNIPRSRVLKDDAVGDIAIHAPATPERLATLRSLPKGFEKSQWGADIVAAVQRGLARDPRELPKIEKPRNNTNGAATVELLKVLLRMTSERHAVASKVIATVDDLERIAADDAADVGALRGWRRELFGEAALALKHGQLALAIEKGRVVRVERS.

A 3'-5' exonuclease domain is found at 4-169 (ITTTAELASV…DVFAALDADL (166 aa)). The 82-residue stretch at 208–289 (KPKDLAVMME…QRGLARDPRE (82 aa)) folds into the HRDC domain.

It belongs to the RNase D family. It depends on a divalent metal cation as a cofactor.

The protein resides in the cytoplasm. The enzyme catalyses Exonucleolytic cleavage that removes extra residues from the 3'-terminus of tRNA to produce 5'-mononucleotides.. Exonuclease involved in the 3' processing of various precursor tRNAs. Initiates hydrolysis at the 3'-terminus of an RNA molecule and releases 5'-mononucleotides. The polypeptide is Ribonuclease D (Nitrobacter hamburgensis (strain DSM 10229 / NCIMB 13809 / X14)).